The following is a 317-amino-acid chain: Probable cell division protein WhiA (317 aa).

Positions 267–300 (SLKELGEMLHPPVGKSGVNHRLRRLELIARQVRG) form a DNA-binding region, H-T-H motif.

The protein belongs to the WhiA family.

Functionally, involved in cell division and chromosome segregation. This chain is Probable cell division protein WhiA, found in Moorella thermoacetica (strain ATCC 39073 / JCM 9320).